We begin with the raw amino-acid sequence, 122 residues long: MARIAGVDLPRGKRVDIALTYIYGVGRATALEILDTTGVDWTRNIDDLSADEVNEIRKEIEQNHKVEGDLRREISSNIKRLMDIGCHRGLRHRRGLPARGQRTKTNARTRKGPRRGVAGKRK.

The segment at 89 to 122 (GLRHRRGLPARGQRTKTNARTRKGPRRGVAGKRK) is disordered.

Belongs to the universal ribosomal protein uS13 family. In terms of assembly, part of the 30S ribosomal subunit. Forms a loose heterodimer with protein S19. Forms two bridges to the 50S subunit in the 70S ribosome.

Its function is as follows. Located at the top of the head of the 30S subunit, it contacts several helices of the 16S rRNA. In the 70S ribosome it contacts the 23S rRNA (bridge B1a) and protein L5 of the 50S subunit (bridge B1b), connecting the 2 subunits; these bridges are implicated in subunit movement. Contacts the tRNAs in the A and P-sites. This Oleidesulfovibrio alaskensis (strain ATCC BAA-1058 / DSM 17464 / G20) (Desulfovibrio alaskensis) protein is Small ribosomal subunit protein uS13.